We begin with the raw amino-acid sequence, 261 residues long: uncharacterized protein (261 aa).

A signal peptide spans 1-22 (MGYSKRFALYISVMILIFAIAG). The N-palmitoyl cysteine moiety is linked to residue Cys-23. The S-diacylglycerol cysteine moiety is linked to residue Cys-23.

This sequence belongs to the staphylococcal tandem lipoprotein family.

It localises to the cell membrane. This is an uncharacterized protein from Staphylococcus aureus (strain N315).